The sequence spans 130 residues: Small ribosomal subunit protein uS8 (130 aa).

The protein belongs to the universal ribosomal protein uS8 family. As to quaternary structure, part of the 30S ribosomal subunit. Contacts proteins S5 and S12.

One of the primary rRNA binding proteins, it binds directly to 16S rRNA central domain where it helps coordinate assembly of the platform of the 30S subunit. The polypeptide is Small ribosomal subunit protein uS8 (Aeromonas hydrophila subsp. hydrophila (strain ATCC 7966 / DSM 30187 / BCRC 13018 / CCUG 14551 / JCM 1027 / KCTC 2358 / NCIMB 9240 / NCTC 8049)).